The primary structure comprises 262 residues: 14-3-3 protein homolog (262 aa).

The protein belongs to the 14-3-3 family.

The sequence is that of 14-3-3 protein homolog from Trichoderma harzianum (Hypocrea lixii).